The chain runs to 306 residues: MGEYGIAPGQRVAVIWDSSSPVEALKGLVDAVQASVGADSRVSVENINQLCQSAHRESSFDVILSGVVPGSTAQHSAEVLAEIARILKPGGRVLLKEPVVTESENNSQIKTAAKLPAALTLSGLVEVKGLQKEPLTAEEAQSVREHLGYQGNDLLIVQIEGRKPNFEVGSSSQLKLSFAKKTSPSGKPSVDPATAKLWTLSASDMNDEEMDLLDSDELLDSEDLKKPDPASLRAPSCKEKGKKKACKNCTCGLAEELEQEKKSSQPKSACGNCYLGDAFRCASCPYLGDACLQAWREDPAEREPAA.

Residues 6-172 (IAPGQRVAVI…KPNFEVGSSS (167 aa)) are N-terminal SAM-like domain. Residues 173-224 (QLKLSFAKKTSPSGKPSVDPATAKLWTLSASDMNDEEMDLLDSDELLDSEDL) form a linker region. [2Fe-2S] cluster is bound by residues Cys237, Cys246, Cys249, and Cys251. A fe-S binding site A region spans residues 237–251 (CKEKGKKKACKNCTC). The [4Fe-4S] cluster site is built by Cys270, Cys273, Cys281, and Cys284. 2 short sequence motifs (cx2C motif) span residues 270 to 273 (CGNC) and 281 to 284 (CASC). Positions 270–284 (CGNCYLGDAFRCASC) are fe-S binding site B.

It belongs to the anamorsin family. Monomer. Interacts with NDOR1. Interacts with CHCHD4. It depends on [2Fe-2S] cluster as a cofactor. [4Fe-4S] cluster serves as cofactor.

It localises to the cytoplasm. The protein localises to the nucleus. It is found in the mitochondrion intermembrane space. In terms of biological role, component of the cytosolic iron-sulfur (Fe-S) protein assembly (CIA) machinery required for the maturation of extramitochondrial Fe-S proteins. Part of an electron transfer chain functioning in an early step of cytosolic Fe-S biogenesis, facilitating the de novo assembly of a [4Fe-4S] cluster on the scaffold complex NUBP1-NUBP2. Electrons are transferred to CIAPIN1 from NADPH via the FAD- and FMN-containing protein NDOR1. NDOR1-CIAPIN1 are also required for the assembly of the diferric tyrosyl radical cofactor of ribonucleotide reductase (RNR), probably by providing electrons for reduction during radical cofactor maturation in the catalytic small subunit. Has anti-apoptotic effects in the cell. Involved in negative control of cell death upon cytokine withdrawal. Promotes development of hematopoietic cells. This chain is Anamorsin, found in Gallus gallus (Chicken).